A 468-amino-acid polypeptide reads, in one-letter code: H(+)/Cl(-) exchange transporter ClcA (468 aa).

Over 1-32 the chain is Cytoplasmic; the sequence is MIKRERIVKSVLAHVPKDAINQFVSRGSTPTS. A helical transmembrane segment spans residues 33-69; the sequence is FSVLFMAAIVGTLAGLVGTYFEIAVHFVSETRTEWLK. Residues 70–76 are Periplasmic-facing; sequence SEIGSVL. Residues 77 to 100 traverse the membrane as a helical segment; sequence PLWLAAILISGALAFIGYYLVNRF. Positions 106 to 110 match the Selectivity filter part_1 motif; it reads GSGIP. Ser107 is a binding site for chloride. The segment at residues 109–116 is an intramembrane region (helical); it reads IPEIEGAM. Residues 117–123 are Cytoplasmic-facing; sequence DNIRSVR. 2 helical membrane-spanning segments follow: residues 124–141 and 148–166; these read WWRVIPVKFFGGMGALGS and EGPTVQMGGAVGRMVTDIF. The Selectivity filter part_2 motif lies at 146-150; it reads GREGP. The Cytoplasmic portion of the chain corresponds to 167 to 176; the sequence is RVKDDDTRHS. 2 consecutive intramembrane regions (helical) follow at residues 177-189 and 193-201; these read LLASGAAGGLAAA and PLAAIMFVV. The Cytoplasmic portion of the chain corresponds to 202–214; that stretch reads EEMRPQFRYSLIS. A helical membrane pass occupies residues 215 to 232; it reads IRAVIISAIMANIVFRAI. The Periplasmic segment spans residues 233 to 252; the sequence is NGQEAVITMPQYQSPELQSL. The chain crosses the membrane as a helical span at residues 253–281; that stretch reads WLFLLLGSLFGVFGVVFNKLITIAQDSFV. The Cytoplasmic segment spans residues 282–287; sequence ALHKND. The helical transmembrane segment at 288 to 309 threads the bilayer; it reads RKRYLITGTILGGVFGLLLLYV. Residues 310–329 lie on the Periplasmic side of the membrane; the sequence is PQLTGGGIGLIPDITNGNYS. The next 2 membrane-spanning stretches (helical) occupy residues 330–349 and 355–376; these read ISILVMLFVGRVITTLLCFG and GIFAPMLALGTLFGYAFGASAD. Positions 355–359 match the Selectivity filter part_3 motif; the sequence is GIFAP. Chloride contacts are provided by Ile356 and Phe357. Residues 377 to 386 lie on the Periplasmic side of the membrane; the sequence is MLLPSLTIEP. An intramembrane region (helical) is located at residues 387-401; the sequence is GVFAIAGMGALFAAT. Residues 402–404 constitute an intramembrane region (note=Loop between two helices); sequence VRA. Residues 405 to 416 constitute an intramembrane region (helical); that stretch reads PITGILLVIEMT. Positions 417 to 421 form an intramembrane region, note=Loop between two helices; that stretch reads NNYYL. Residues 422 to 438 traverse the membrane as a helical segment; that stretch reads ILPLIITSLGAVIVAQL. Topologically, residues 439–468 are cytoplasmic; it reads LGGQPIYSQLLHRTLKNDKLRQQDLPENQA. Residue Tyr445 coordinates chloride.

The protein belongs to the chloride channel (TC 2.A.49) family. ClcA subfamily. In terms of assembly, homodimer.

The protein localises to the cell inner membrane. The catalysed reaction is 2 chloride(in) + H(+)(out) = 2 chloride(out) + H(+)(in). Functionally, proton-coupled chloride transporter. Functions as antiport system and exchanges two chloride ions for 1 proton. Probably acts as an electrical shunt for an outwardly-directed proton pump that is linked to amino acid decarboxylation, as part of the extreme acid resistance (XAR) response. In Vibrio campbellii (strain ATCC BAA-1116), this protein is H(+)/Cl(-) exchange transporter ClcA.